Consider the following 503-residue polypeptide: Maturase K (503 aa).

This sequence belongs to the intron maturase 2 family. MatK subfamily.

Its subcellular location is the plastid. It is found in the chloroplast. In terms of biological role, usually encoded in the trnK tRNA gene intron. Probably assists in splicing its own and other chloroplast group II introns. In Cercocarpus betuloides (Mountain mahogany), this protein is Maturase K.